The sequence spans 138 residues: MRVLGLDLGTKTLGVAVSDELGWTAQGIETISIDEERGEYGLKRLREIIDEYEVDTIVVGFPKNMNGTVGPRAEASQRFAKLLESEFSLPVILWDERLSTMAAERMLITADVSRKKRKQVIDKMAAVVILQSYLDSKQ.

This sequence belongs to the YqgF nuclease family.

Its subcellular location is the cytoplasm. In terms of biological role, could be a nuclease involved in processing of the 5'-end of pre-16S rRNA. This chain is Putative pre-16S rRNA nuclease, found in Geobacillus sp. (strain WCH70).